The sequence spans 51 residues: Large ribosomal subunit protein eL39 (51 aa).

The protein belongs to the eukaryotic ribosomal protein eL39 family.

This is Large ribosomal subunit protein eL39 from Sulfurisphaera tokodaii (strain DSM 16993 / JCM 10545 / NBRC 100140 / 7) (Sulfolobus tokodaii).